Here is a 103-residue protein sequence, read N- to C-terminus: MQNQRIRIRLKAFDYKLIDQSTAEIVETAKRTGAQVRGPIPLPTRKERFTVLTSPHVNKDARDQYEIRTHKRLIDIVEPTDKTVDALMRLDLAAGVDVQISLG.

The protein belongs to the universal ribosomal protein uS10 family. As to quaternary structure, part of the 30S ribosomal subunit.

Functionally, involved in the binding of tRNA to the ribosomes. The chain is Small ribosomal subunit protein uS10 from Aliivibrio fischeri (strain ATCC 700601 / ES114) (Vibrio fischeri).